A 214-amino-acid chain; its full sequence is Riboflavin kinase (214 aa).

A disordered region spans residues 1–26 (MRPDGPRDPVAGPDSGPEPPYPVRLS). 2 residues coordinate Mg(2+): Thr44 and Asn46. Glu116 (nucleophile) is an active-site residue.

This sequence belongs to the flavokinase family. It depends on Zn(2+) as a cofactor. Mg(2+) serves as cofactor.

The enzyme catalyses riboflavin + ATP = FMN + ADP + H(+). It functions in the pathway cofactor biosynthesis; FMN biosynthesis; FMN from riboflavin (ATP route): step 1/1. Catalyzes the phosphorylation of riboflavin (vitamin B2) to form flavin mononucleotide (FMN) coenzyme. The chain is Riboflavin kinase (fmn1) from Aspergillus fumigatus (strain ATCC MYA-4609 / CBS 101355 / FGSC A1100 / Af293) (Neosartorya fumigata).